The following is an 859-amino-acid chain: MASSEVSMKGNRGGDNFSSSGFSDPKETRNVSVAGEGQKSNSTRSAAAERALDPEAALYRELWHACAGPLVTVPRQDDRVFYFPQGHIEQVEASTNQAAEQQMPLYDLPSKLLCRVINVDLKAEADTDEVYAQITLLPEANQDENAIEKEAPLPPPPRFQVHSFCKTLTASDTSTHGGFSVLRRHADECLPPLDMSRQPPTQELVAKDLHANEWRFRHIFRGQPRRHLLQSGWSVFVSSKRLVAGDAFIFLRGENGELRVGVRRAMRQQGNVPSSVISSHSMHLGVLATAWHAISTGTMFTVYYKPRTSPSEFIVPFDQYMESVKNNYSIGMRFKMRFEGEEAPEQRFTGTIVGIEESDPTRWPKSKWRSLKVRWDETSSIPRPDRVSPWKVEPALAPPALSPVPMPRPKRPRSNIAPSSPDSSMLTREGTTKANMDPLPASGLSRVLQGQEYSTLRTKHTESVECDAPENSVVWQSSADDDKVDVVSGSRRYGSENWMSSARHEPTYTDLLSGFGTNIDPSHGQRIPFYDHSSSPSMPAKRILSDSEGKFDYLANQWQMIHSGLSLKLHESPKVPAATDASLQGRCNVKYSEYPVLNGLSTENAGGNWPIRPRALNYYEEVVNAQAQAQAREQVTKQPFTIQEETAKSREGNCRLFGIPLTNNMNGTDSTMSQRNNLNDAAGLTQIASPKVQDLSDQSKGSKSTNDHREQGRPFQTNNPHPKDAQTKTNSSRSCTKVHKQGIALGRSVDLSKFQNYEELVAELDRLFEFNGELMAPKKDWLIVYTDEENDMMLVGDDPWQEFCCMVRKIFIYTKEEVRKMNPGTLSCRSEEEAVVGEGSDAKDAKSASNPSLSSAGNS.

Residues 1–48 (MASSEVSMKGNRGGDNFSSSGFSDPKETRNVSVAGEGQKSNSTRSAAA) are disordered. A compositionally biased stretch (low complexity) spans 14-23 (GDNFSSSGFS). The TF-B3 DNA-binding region spans 164 to 266 (FCKTLTASDT…ELRVGVRRAM (103 aa)). Positions 396 to 407 (LAPPALSPVPMP) are enriched in pro residues. Disordered stretches follow at residues 396-442 (LAPP…LPAS), 687-736 (IASP…RSCT), and 829-859 (RSEE…AGNS). Composition is skewed to polar residues over residues 416–426 (IAPSSPDSSML) and 695–704 (LSDQSKGSKS). Positions 733 to 817 (RSCTKVHKQG…RKIFIYTKEE (85 aa)) constitute a PB1 domain. The span at 847 to 859 (SASNPSLSSAGNS) shows a compositional bias: polar residues.

It belongs to the ARF family. Homodimers and heterodimers. Interacts with ARF1. Expressed in the whole plant.

It is found in the nucleus. Functionally, auxin response factors (ARFs) are transcriptional factors that bind specifically to the DNA sequence 5'-TGTCTC-3' found in the auxin-responsive promoter elements (AuxREs). Could act as transcriptional activator or repressor. Formation of heterodimers with Aux/IAA proteins may alter their ability to modulate early auxin response genes expression. Promotes flowering, stamen development, floral organ abscission and fruit dehiscence. Functions independently of ethylene and cytokinin response pathways. May act as a repressor of cell division and organ growth. The protein is Auxin response factor 2 (ARF2) of Arabidopsis thaliana (Mouse-ear cress).